The primary structure comprises 465 residues: MDVHGKKASIIGAKRSGVAAAELLAKSGAKVFVSELGEPGASEAERLADCGIPWEQDGHTDRVCDADFCVVSPGIPRTAGIIRRVLEQGIPLYSEIEAASWFCKARIAGITGTDGKTTTSTLLHRIAEADGMKNDYRAFSVGNIGVPFSSLVLDMAPADLAVVELSSYQLEGCETFRPDVSVITNITPDHLDRYNGDMQLYAAAKFRIYASQRASDTLVYNFDDPLLRAQFSGNGRGFPFRIVPFGIGNDVPGSGSEEAFFYDEGMIRHLTAKGISEVFSGEDFLKSSFRGRHNIYNALAALAAAAALGIEESVARKAISGFSGVEHRQEFVCSLDGVEWINDSKATNVNALLQALDAVPGSIVLIAGGRDKGNDYTVLFDVVRRKVVTVIAIGEAREKILQVFEGITRTAGADTLDDAVALARESAEKGQTVLFSPGCASFDMFENFEERGRLFKRSILALNPC.

112 to 118 lines the ATP pocket; that stretch reads GTDGKTT.

Belongs to the MurCDEF family.

Its subcellular location is the cytoplasm. The enzyme catalyses UDP-N-acetyl-alpha-D-muramoyl-L-alanine + D-glutamate + ATP = UDP-N-acetyl-alpha-D-muramoyl-L-alanyl-D-glutamate + ADP + phosphate + H(+). The protein operates within cell wall biogenesis; peptidoglycan biosynthesis. In terms of biological role, cell wall formation. Catalyzes the addition of glutamate to the nucleotide precursor UDP-N-acetylmuramoyl-L-alanine (UMA). This chain is UDP-N-acetylmuramoylalanine--D-glutamate ligase, found in Chlorobium limicola (strain DSM 245 / NBRC 103803 / 6330).